The chain runs to 253 residues: 5'-nucleotidase SurE (253 aa).

A divalent metal cation is bound by residues aspartate 8, aspartate 9, serine 40, and asparagine 93.

Belongs to the SurE nucleotidase family. A divalent metal cation serves as cofactor.

It localises to the cytoplasm. The catalysed reaction is a ribonucleoside 5'-phosphate + H2O = a ribonucleoside + phosphate. Functionally, nucleotidase that shows phosphatase activity on nucleoside 5'-monophosphates. This chain is 5'-nucleotidase SurE, found in Methylobacterium nodulans (strain LMG 21967 / CNCM I-2342 / ORS 2060).